The primary structure comprises 437 residues: Serine hydroxymethyltransferase 1 (437 aa).

(6S)-5,6,7,8-tetrahydrofolate is bound by residues leucine 132 and 136-138 (GHL). Lysine 241 is modified (N6-(pyridoxal phosphate)lysine).

The protein belongs to the SHMT family. As to quaternary structure, homodimer. Requires pyridoxal 5'-phosphate as cofactor.

The protein localises to the cytoplasm. It catalyses the reaction (6R)-5,10-methylene-5,6,7,8-tetrahydrofolate + glycine + H2O = (6S)-5,6,7,8-tetrahydrofolate + L-serine. It functions in the pathway one-carbon metabolism; tetrahydrofolate interconversion. It participates in amino-acid biosynthesis; glycine biosynthesis; glycine from L-serine: step 1/1. Its function is as follows. Catalyzes the reversible interconversion of serine and glycine with tetrahydrofolate (THF) serving as the one-carbon carrier. This reaction serves as the major source of one-carbon groups required for the biosynthesis of purines, thymidylate, methionine, and other important biomolecules. Also exhibits THF-independent aldolase activity toward beta-hydroxyamino acids, producing glycine and aldehydes, via a retro-aldol mechanism. This is Serine hydroxymethyltransferase 1 from Mesorhizobium japonicum (strain LMG 29417 / CECT 9101 / MAFF 303099) (Mesorhizobium loti (strain MAFF 303099)).